We begin with the raw amino-acid sequence, 493 residues long: NADH-quinone oxidoreductase subunit N 2 (493 aa).

Helical transmembrane passes span I16–I36, F45–Q65, G87–S107, G119–T139, L141–F161, L176–I196, V219–F239, L258–L278, W285–I305, L313–N333, I340–A360, A385–L405, G421–V441, and C464–L484.

The protein belongs to the complex I subunit 2 family. NDH-1 is composed of 14 different subunits. Subunits NuoA, H, J, K, L, M, N constitute the membrane sector of the complex.

The protein resides in the cell inner membrane. The catalysed reaction is a quinone + NADH + 5 H(+)(in) = a quinol + NAD(+) + 4 H(+)(out). NDH-1 shuttles electrons from NADH, via FMN and iron-sulfur (Fe-S) centers, to quinones in the respiratory chain. The immediate electron acceptor for the enzyme in this species is believed to be ubiquinone. Couples the redox reaction to proton translocation (for every two electrons transferred, four hydrogen ions are translocated across the cytoplasmic membrane), and thus conserves the redox energy in a proton gradient. The sequence is that of NADH-quinone oxidoreductase subunit N 2 from Solibacter usitatus (strain Ellin6076).